The sequence spans 143 residues: MAKKIDGYIKLMVPAGTANPSPPLGPALGQRGVNIMEFCKAFNAATDGMEKNAPVPTVITVYADRSFSFVTKQPTATYLIKKAAKIKKGSGETGKVSAGTIKQSQVKEIAETKMPDLNANDIDQAMKIIEGSCRAMGLEVVEG.

This sequence belongs to the universal ribosomal protein uL11 family. As to quaternary structure, part of the ribosomal stalk of the 50S ribosomal subunit. Interacts with L10 and the large rRNA to form the base of the stalk. L10 forms an elongated spine to which L12 dimers bind in a sequential fashion forming a multimeric L10(L12)X complex. One or more lysine residues are methylated.

Forms part of the ribosomal stalk which helps the ribosome interact with GTP-bound translation factors. The sequence is that of Large ribosomal subunit protein uL11 from Erythrobacter litoralis (strain HTCC2594).